We begin with the raw amino-acid sequence, 224 residues long: Orotate phosphoribosyltransferase (224 aa).

Residues Lys26, 73–74 (YK), Arg100, Lys101, Lys104, His106, and 127–135 (EDVTTSGKS) each bind 5-phospho-alpha-D-ribose 1-diphosphate. Residues Thr131 and Arg160 each contribute to the orotate site.

The protein belongs to the purine/pyrimidine phosphoribosyltransferase family. PyrE subfamily. In terms of assembly, homodimer. Mg(2+) is required as a cofactor.

The catalysed reaction is orotidine 5'-phosphate + diphosphate = orotate + 5-phospho-alpha-D-ribose 1-diphosphate. It functions in the pathway pyrimidine metabolism; UMP biosynthesis via de novo pathway; UMP from orotate: step 1/2. Catalyzes the transfer of a ribosyl phosphate group from 5-phosphoribose 1-diphosphate to orotate, leading to the formation of orotidine monophosphate (OMP). The protein is Orotate phosphoribosyltransferase of Clostridium botulinum (strain Alaska E43 / Type E3).